The following is a 603-amino-acid chain: Proline--tRNA ligase (603 aa).

This sequence belongs to the class-II aminoacyl-tRNA synthetase family. ProS type 1 subfamily. As to quaternary structure, homodimer.

It localises to the cytoplasm. The enzyme catalyses tRNA(Pro) + L-proline + ATP = L-prolyl-tRNA(Pro) + AMP + diphosphate. Functionally, catalyzes the attachment of proline to tRNA(Pro) in a two-step reaction: proline is first activated by ATP to form Pro-AMP and then transferred to the acceptor end of tRNA(Pro). As ProRS can inadvertently accommodate and process non-cognate amino acids such as alanine and cysteine, to avoid such errors it has two additional distinct editing activities against alanine. One activity is designated as 'pretransfer' editing and involves the tRNA(Pro)-independent hydrolysis of activated Ala-AMP. The other activity is designated 'posttransfer' editing and involves deacylation of mischarged Ala-tRNA(Pro). The misacylated Cys-tRNA(Pro) is not edited by ProRS. The chain is Proline--tRNA ligase from Arthrobacter sp. (strain FB24).